The chain runs to 252 residues: 3-deoxy-manno-octulosonate cytidylyltransferase (252 aa).

Belongs to the KdsB family.

It is found in the cytoplasm. The enzyme catalyses 3-deoxy-alpha-D-manno-oct-2-ulosonate + CTP = CMP-3-deoxy-beta-D-manno-octulosonate + diphosphate. Its pathway is nucleotide-sugar biosynthesis; CMP-3-deoxy-D-manno-octulosonate biosynthesis; CMP-3-deoxy-D-manno-octulosonate from 3-deoxy-D-manno-octulosonate and CTP: step 1/1. The protein operates within bacterial outer membrane biogenesis; lipopolysaccharide biosynthesis. Its function is as follows. Activates KDO (a required 8-carbon sugar) for incorporation into bacterial lipopolysaccharide in Gram-negative bacteria. The chain is 3-deoxy-manno-octulosonate cytidylyltransferase from Rhodospirillum rubrum (strain ATCC 11170 / ATH 1.1.1 / DSM 467 / LMG 4362 / NCIMB 8255 / S1).